Consider the following 534-residue polypeptide: Probable alpha-galactosidase A (534 aa).

The signal sequence occupies residues 1–25 (MRLITRWIPLANALASTMPVQVVAS). Cys-47 and Cys-79 are oxidised to a cystine. N-linked (GlcNAc...) asparagine glycosylation is found at Asn-50, Asn-88, Asn-94, and Asn-124. A disulfide bridge links Cys-127 with Cys-157. The active-site Nucleophile is the Asp-155. Asn-204 carries an N-linked (GlcNAc...) asparagine glycan. Asp-213 serves as the catalytic Proton donor. A Ricin B-type lectin domain is found at 413–534 (CSQVIPTGLI…GLPAGVHVAL (122 aa)). Cys-430 and Cys-443 are oxidised to a cystine. N-linked (GlcNAc...) asparagine glycosylation occurs at Asn-444. Residues Cys-468 and Cys-481 are joined by a disulfide bond.

It belongs to the glycosyl hydrolase 27 family.

It localises to the secreted. The catalysed reaction is Hydrolysis of terminal, non-reducing alpha-D-galactose residues in alpha-D-galactosides, including galactose oligosaccharides, galactomannans and galactolipids.. Its function is as follows. Hydrolyzes a variety of simple alpha-D-galactoside as well as more complex molecules such as oligosaccharides and polysaccharides. The protein is Probable alpha-galactosidase A (aglA) of Aspergillus oryzae (strain ATCC 42149 / RIB 40) (Yellow koji mold).